Here is a 369-residue protein sequence, read N- to C-terminus: Type 2 DNA topoisomerase 6 subunit A (369 aa).

In terms of domain architecture, Topo IIA-type catalytic spans 11 to 149 (QRDLLAREKL…FHMRPEEDGA (139 aa)). Catalysis depends on Tyr-106, which acts as the O-(5'-phospho-DNA)-tyrosine intermediate. 2 residues coordinate Mg(2+): Glu-202 and Asp-254.

It belongs to the TOP6A family. In terms of assembly, homodimer. Heterotetramer of two Top6A and two Top6B chains. Mg(2+) is required as a cofactor.

The enzyme catalyses ATP-dependent breakage, passage and rejoining of double-stranded DNA.. Its function is as follows. Relaxes both positive and negative superturns and exhibits a strong decatenase activity. The chain is Type 2 DNA topoisomerase 6 subunit A from Methanosarcina barkeri (strain Fusaro / DSM 804).